A 381-amino-acid polypeptide reads, in one-letter code: Teichoic acid glycerol-phosphate primase (381 aa).

It belongs to the CDP-glycerol glycerophosphotransferase family.

It is found in the cell membrane. It catalyses the reaction N-acetyl-beta-D-mannosaminyl-(1-&gt;4)-N-acetyl-alpha-D-glucosaminyl di-trans,octa-cis-undecaprenyl diphosphate + CDP-glycerol = 4-O-[(2R)-glycerylphospho]-N-acetyl-beta-D-mannosaminyl-(1-&gt;4)-N-acetyl-alpha-D-glucosaminyl di-trans,octa-cis-undecaprenyl diphosphate + CMP + H(+). The protein operates within cell wall biogenesis; poly(glycerol phosphate) teichoic acid biosynthesis. Catalyzes the addition of a single glycerol phosphate residue to the prenoldiphosphate-linked disaccharide, as a primer for polymerisation by TagF. The polypeptide is Teichoic acid glycerol-phosphate primase (tagB) (Bacillus subtilis (strain 168)).